We begin with the raw amino-acid sequence, 470 residues long: Uronate isomerase (470 aa).

The protein belongs to the metallo-dependent hydrolases superfamily. Uronate isomerase family.

The enzyme catalyses D-glucuronate = D-fructuronate. The catalysed reaction is aldehydo-D-galacturonate = keto-D-tagaturonate. It participates in carbohydrate metabolism; pentose and glucuronate interconversion. This Cutibacterium acnes (strain DSM 16379 / KPA171202) (Propionibacterium acnes) protein is Uronate isomerase.